The following is a 419-amino-acid chain: Monooxygenase CTB7 (419 aa).

This sequence belongs to the aromatic-ring hydroxylase family. KMO subfamily.

It participates in mycotoxin biosynthesis. Its function is as follows. Monooxygenase; part of the gene cluster that mediates the biosynthesis of cercosporin, a light-activated, non-host-selective toxin. The perylenequinone chromophore of cercosporin absorbs light energy to attain an electronically-activated triplet state and produces active oxygen species such as the hydroxyl radical, superoxide, hydrogen peroxide or singlet oxygen upon reaction with oxygen molecules. These reactive oxygen species cause damage to various cellular components including lipids, proteins and nucleic acids. The first step of cercosporin biosynthesis is performed by the polyketide synthase CTB1 which catalyzes the formation of nor-toralactone. The starter unit acyltransferase (SAT) domain of CTB1 initiates polyketide extension by the selective utilization of acetyl-CoA, which is elongated to the heptaketide in the beta-ketoacyl synthase (KS) domain by successive condensations with six malonyl units introduced by the malonyl acyltransferase (MAT) domain. The product template (PT) domain catalyzes C4-C9 and C2-C11 aldol cyclizations and dehydrations to a trihydroxynaphthalene, which is thought to be delivered to the thioesterase (TE) domain for product release. The bifunctional enzyme CTB3 then methylates nor-toralactone to toralactone before conducting an unusual oxidative aromatic ring opening. The O-methyltransferase CTB2 further methylates the nascent OH-6 of the CBT3 product, blocking further oxidation at this site before the reductase CTB6 reduces the 2-oxopropyl ketone at position C7, giving naphthalene. The FAD-dependent monooxygenase CTB5 in concert with the multicopper oxidase CTB12 are responsible for homodimerization of naphthalene with CTB7 installing the dioxepine moiety, finally producing cercosporin. The fasciclin domain-containing protein CTB11 might act with CTB5 and CTB12 whereas the roles of CTB9 and CTB10 have still to be elucidated. The protein is Monooxygenase CTB7 of Cercospora beticola (Sugarbeet leaf spot fungus).